Reading from the N-terminus, the 218-residue chain is Peptide methionine sulfoxide reductase MsrA (218 aa).

Residue cysteine 57 is part of the active site.

It belongs to the MsrA Met sulfoxide reductase family.

The enzyme catalyses L-methionyl-[protein] + [thioredoxin]-disulfide + H2O = L-methionyl-(S)-S-oxide-[protein] + [thioredoxin]-dithiol. The catalysed reaction is [thioredoxin]-disulfide + L-methionine + H2O = L-methionine (S)-S-oxide + [thioredoxin]-dithiol. Functionally, has an important function as a repair enzyme for proteins that have been inactivated by oxidation. Catalyzes the reversible oxidation-reduction of methionine sulfoxide in proteins to methionine. This chain is Peptide methionine sulfoxide reductase MsrA, found in Brucella melitensis biotype 1 (strain ATCC 23456 / CCUG 17765 / NCTC 10094 / 16M).